The sequence spans 316 residues: DNA-directed RNA polymerase subunit alpha (316 aa).

Residues 1–232 (MSGNDLFPST…DLFNPLHHCS (232 aa)) are alpha N-terminal domain (alpha-NTD). An alpha C-terminal domain (alpha-CTD) region spans residues 247–316 (KINDILVEEL…LNIYLPKEKY (70 aa)).

Belongs to the RNA polymerase alpha chain family. In terms of assembly, in plastids the minimal PEP RNA polymerase catalytic core is composed of four subunits: alpha, beta, beta', and beta''. When a (nuclear-encoded) sigma factor is associated with the core the holoenzyme is formed, which can initiate transcription.

It localises to the plastid. Its subcellular location is the chloroplast. It catalyses the reaction RNA(n) + a ribonucleoside 5'-triphosphate = RNA(n+1) + diphosphate. Functionally, DNA-dependent RNA polymerase catalyzes the transcription of DNA into RNA using the four ribonucleoside triphosphates as substrates. This chain is DNA-directed RNA polymerase subunit alpha, found in Mesostigma viride (Green alga).